Here is a 392-residue protein sequence, read N- to C-terminus: Protein NolC (392 aa).

The J domain maps to 2–71; sequence KRDLYETLGV…RAAYDRYGHA (70 aa). Disordered stretches follow at residues 103–142 and 157–244; these read RRDD…QDGA and LGRE…TGLR. Basic and acidic residues predominate over residues 157–170; sequence LGREAGHQPEDLRH. Positions 171-185 are enriched in low complexity; it reads LPGLRPYPRRPGLLL. Positions 186 to 203 are enriched in basic and acidic residues; it reads DRTHLPDLRRSRSDDHRS. A compositionally biased stretch (basic residues) spans 227-241; the sequence is HRGRHAYPPLRRGRT.

In Rhizobium fredii (Sinorhizobium fredii), this protein is Protein NolC (nolC).